Consider the following 1193-residue polypeptide: Protein diaphanous homolog 3 (1193 aa).

Basic residues predominate over residues 1-10 (MERHQPRLHH). The disordered stretch occupies residues 1–57 (MERHQPRLHHPAQGSAAGTPYPSSASLRGCRESKMPRRKGPQHPPPPSGPEEPGEKR). Serine 26 carries the phosphoserine modification. The Nuclear localization signal motif lies at 36 to 60 (PRRKGPQHPPPPSGPEEPGEKRPKF). At threonine 68 the chain carries Phosphothreonine. Residues serine 77 and serine 175 each carry the phosphoserine modification. The region spanning 114-476 (PKPLSENELL…QIVLHRDGMD (363 aa)) is the GBD/FH3 domain. Residues 497–554 (IDQAKLEEFEEKASELYKKFEKEFTDHQETQAELQKKEAKINELQAELQAFKSQFGAL) adopt a coiled-coil conformation. The tract at residues 558–622 (CNIPLPPSKE…PPPLGFLGGQ (65 aa)) is disordered. The FH1 domain maps to 561–631 (PLPPSKEGGT…QNSPPLPILP (71 aa)). Over residues 575 to 600 (LPPPPPLPSGGGVPPPPPPPPPPPLP) the composition is skewed to pro residues. The residue at position 624 (serine 624) is a Phosphoserine. An FH2 domain is found at 636-1034 (PKKEFKPEIS…EKRVRIAKEL (399 aa)). Residues 1013–1056 (KENIKKREAEEKEKRVRIAKELAERERLERQQKKKRLLEMKTEG) adopt a coiled-coil conformation. Positions 1057–1087 (DETGVMDNLLEALQSGAAFRDRRKRTPMPKD) constitute a DAD domain. Residues serine 1093 and serine 1179 each carry the phosphoserine modification. The short motif at 1184 to 1193 (EALLARLRAL) is the Nuclear export signal element.

This sequence belongs to the formin homology family. Diaphanous subfamily. Post-translationally, ubiquitinated.

The protein localises to the cytoplasm. Its subcellular location is the nucleus. In terms of biological role, actin nucleation and elongation factor required for the assembly of F-actin structures, such as actin cables and stress fibers. Required for cytokinesis, stress fiber formation and transcriptional activation of the serum response factor. Binds to GTP-bound form of Rho and to profilin: acts in a Rho-dependent manner to recruit profilin to the membrane, where it promotes actin polymerization. DFR proteins couple Rho and Src tyrosine kinase during signaling and the regulation of actin dynamics. Also acts as an actin nucleation and elongation factor in the nucleus by promoting nuclear actin polymerization inside the nucleus to drive serum-dependent SRF-MRTFA activity. In Homo sapiens (Human), this protein is Protein diaphanous homolog 3 (DIAPH3).